The following is a 1247-amino-acid chain: Lon protease homolog 2, peroxisomal (1247 aa).

The Lon N-terminal domain occupies 22-402 (LPTYTLDSNL…LINEMILQLI (381 aa)). 3 disordered regions span residues 76 to 103 (SGNS…ETYH), 447 to 503 (TKNR…DVDD), and 626 to 655 (DQSD…SPTS). Over residues 459 to 477 (PGPASSSGPSFSNGKSSPG) the composition is skewed to low complexity. Basic and acidic residues predominate over residues 626 to 639 (DQSDKSQPIKDNSK). 721 to 728 (GPPGTGKT) lines the ATP pocket. One can recognise a Lon proteolytic domain in the interval 989-1230 (TVGVGVVHGL…YDIIKIVWNE (242 aa)). Residues S1099 and K1142 contribute to the active site.

Belongs to the peptidase S16 family.

It localises to the peroxisome matrix. The catalysed reaction is Hydrolysis of proteins in presence of ATP.. Functionally, ATP-dependent serine protease that mediates the selective degradation of misfolded and unassembled polypeptides in the peroxisomal matrix. Necessary for type 2 peroxisome targeting signal (PTS2)-containing protein processing and facilitates peroxisome matrix protein import. In Candida dubliniensis (strain CD36 / ATCC MYA-646 / CBS 7987 / NCPF 3949 / NRRL Y-17841) (Yeast), this protein is Lon protease homolog 2, peroxisomal.